A 751-amino-acid chain; its full sequence is Proton-associated sugar transporter A (751 aa).

6 consecutive transmembrane segments (helical) span residues 93 to 113 (ILFG…PVLL), 123 to 143 (SLVW…LGAW), 155 to 175 (RPFI…LLNG), 191 to 211 (WGIL…DSAD), 233 to 253 (IHAL…GIHW), and 268 to 288 (VIYI…LVSI). Thr-500 bears the Phosphothreonine mark. 6 helical membrane passes run 536-556 (GWLS…EVVF), 576-596 (VTMG…YSAI), 606-626 (VRTL…LATL), 630-650 (LYVV…LCTL), 688-708 (FLAQ…VGSA), and 710-730 (GVMY…SLCV).

The protein belongs to the glycoside-pentoside-hexuronide (GPH) cation symporter transporter (TC 2.A.2) family. As to expression, predominantly expressed in brain.

Its subcellular location is the membrane. The catalysed reaction is D-galactose(in) + H(+)(in) = D-galactose(out) + H(+)(out). It carries out the reaction D-glucose(out) + H(+)(out) = D-glucose(in) + H(+)(in). Its function is as follows. Proton-associated glucose transporter in the brain. The chain is Proton-associated sugar transporter A from Rattus norvegicus (Rat).